The primary structure comprises 419 residues: F-box/LRR-repeat protein At1g67190 (419 aa).

The 48-residue stretch at 1–48 (MDYLPVEVIGNILSRLGGARDVVIASATCRKWREACRKHLQTLSFNSA) folds into the F-box domain. LRR repeat units lie at residues 53 to 82 (YRDL…SIMM), 96 to 124 (WLMY…EICG), 133 to 157 (LAHN…LSLS), 158 to 183 (YVSI…ELVS), 185 to 209 (EIAM…YFDG), 245 to 272 (HFKL…DVNH), 273 to 297 (FTMV…RLWD), 301 to 326 (DDDD…SLSY), and 356 to 381 (INDV…IIYG).

This chain is F-box/LRR-repeat protein At1g67190, found in Arabidopsis thaliana (Mouse-ear cress).